The chain runs to 2629 residues: Telomerase protein component 1 (2629 aa).

TEP1 N-terminal repeat units follow at residues 1–30, 31–60, 61–90, and 91–120; these read MEKL…DLQP, LEKI…DLQP, TERI…DLQP, and LEKL…TVKS. A TROVE domain is found at 227–685; it reads LKLTSGDSGF…VKHNLSPMPG (459 aa). The segment covering 386 to 397 has biased composition (basic residues); it reads PRKHRSKRRSRQ. The disordered stretch occupies residues 386–412; the sequence is PRKHRSKRRSRQPPRPQKTERPFSERG. Residues 402–412 are compositionally biased toward basic and acidic residues; sequence QKTERPFSERG. Residues 1171–1578 form the NACHT domain; that stretch reads RLSLVTGQAG…EFLTNLHVVA (408 aa). 1177–1184 contributes to the ATP binding site; it reads GQAGQGKT. WD repeat units follow at residues 1420 to 1462, 1681 to 1720, 1723 to 1761, 1764 to 1803, 1805 to 1844, 1847 to 1886, 1889 to 1930, 1932 to 1971, 1974 to 2013, 2015 to 2054, 2067 to 2106, 2113 to 2151, 2154 to 2191, 2193 to 2241, 2244 to 2282, 2285 to 2324, 2326 to 2362, 2375 to 2424, 2467 to 2507, 2555 to 2592, and 2594 to 2628; these read VLPQ…EVLA, TMSS…EEKA, SGCD…WVFQ, AHQY…LAFQ, THPK…VTKE, APGP…RLAA, AQCG…GCLG, LPLS…QGPQ, ELNV…HSLW, LSRY…QPHV, GHEG…APLL, CHRD…QLGQ, GHQS…LTSI, AHSG…QIRT, GHSG…DDSY, RSSV…ATAQ, PGRV…GSTS, EDWG…SSIL, PNGS…GEWI, IHLG…LLGL, and RCEG…FLSW.

As to quaternary structure, associated component of the telomerase holoenzyme complex. Component of the vault ribonucleoprotein particle, at least composed of MVP, PARP4 and one or more vault RNAs (vRNAs). Binds to VAULTRC1, VAULTRC2 and VAULTRC4/hvg4 vRNAs. As to expression, ubiquitous.

It localises to the nucleus. Its subcellular location is the chromosome. The protein localises to the telomere. Component of the telomerase ribonucleoprotein complex that is essential for the replication of chromosome termini. Also a component of the ribonucleoprotein vaults particle, a multi-subunit structure involved in nucleo-cytoplasmic transport. Responsible for the localizing and stabilizing vault RNA (vRNA) association in the vault ribonucleoprotein particle. The polypeptide is Telomerase protein component 1 (Tep1) (Mus musculus (Mouse)).